Here is a 573-residue protein sequence, read N- to C-terminus: Urease subunit alpha 2 (573 aa).

Residues 135–573 (GGMDTHVHYI…ISLNQLYFFS (439 aa)) enclose the Urease domain. Ni(2+) is bound by residues His-140, His-142, and Lys-223. Residue Lys-223 is modified to N6-carboxylysine. His-225 is a binding site for substrate. Ni(2+) is bound by residues His-252 and His-278. His-326 serves as the catalytic Proton donor. Asp-366 is a binding site for Ni(2+).

It belongs to the metallo-dependent hydrolases superfamily. Urease alpha subunit family. In terms of assembly, heterotrimer of UreA (gamma), UreB (beta) and UreC (alpha) subunits. Three heterotrimers associate to form the active enzyme. The cofactor is Ni cation. Post-translationally, carboxylation allows a single lysine to coordinate two nickel ions.

The protein resides in the cytoplasm. The enzyme catalyses urea + 2 H2O + H(+) = hydrogencarbonate + 2 NH4(+). The protein operates within nitrogen metabolism; urea degradation; CO(2) and NH(3) from urea (urease route): step 1/1. The chain is Urease subunit alpha 2 from Brucella melitensis biotype 1 (strain ATCC 23456 / CCUG 17765 / NCTC 10094 / 16M).